Consider the following 156-residue polypeptide: Ribosomal RNA large subunit methyltransferase H (156 aa).

S-adenosyl-L-methionine is bound by residues L73, G104, and 123–128; that span reads LSKLTL.

Belongs to the RNA methyltransferase RlmH family. In terms of assembly, homodimer.

The protein localises to the cytoplasm. It catalyses the reaction pseudouridine(1915) in 23S rRNA + S-adenosyl-L-methionine = N(3)-methylpseudouridine(1915) in 23S rRNA + S-adenosyl-L-homocysteine + H(+). Functionally, specifically methylates the pseudouridine at position 1915 (m3Psi1915) in 23S rRNA. The protein is Ribosomal RNA large subunit methyltransferase H of Idiomarina loihiensis (strain ATCC BAA-735 / DSM 15497 / L2-TR).